The chain runs to 119 residues: Large ribosomal subunit protein uL18 (119 aa).

Belongs to the universal ribosomal protein uL18 family. Part of the 50S ribosomal subunit; part of the 5S rRNA/L5/L18/L25 subcomplex. Contacts the 5S and 23S rRNAs.

Functionally, this is one of the proteins that bind and probably mediate the attachment of the 5S RNA into the large ribosomal subunit, where it forms part of the central protuberance. This Nitratidesulfovibrio vulgaris (strain DP4) (Desulfovibrio vulgaris) protein is Large ribosomal subunit protein uL18.